Consider the following 281-residue polypeptide: uncharacterized protein (281 aa).

Disordered stretches follow at residues 192 to 212 (SNSS…IQET) and 227 to 281 (EDYV…SEEY). Residues 200–211 (MDKKSDDSKIQE) are compositionally biased toward basic and acidic residues. Acidic residues-rich tracts occupy residues 227–240 (EDYV…ISDN) and 249–260 (DTDSDLGDLEDP).

It belongs to the cullin family.

This is an uncharacterized protein from Acanthamoeba polyphaga (Amoeba).